Consider the following 160-residue polypeptide: MTDFIPTTDLSDAQPQAQVAAPVLRDFGGRTRFQGAAVTLRISENNPLVRQTLQTPGAGRVLVVDGGGSLNCALLGGNLGVFGVENGWEGVIIHGCVRDTAELRELDLGIRALAAHPRRSGKLEEGERDVPVTFAGVTIRPGDHVVADEDGWLVLGAESP.

Substrate-binding positions include 76–79 and R98; that span reads GGNL. D99 contacts a divalent metal cation.

This sequence belongs to the class II aldolase/RraA-like family. In terms of assembly, homotrimer. Requires a divalent metal cation as cofactor.

The enzyme catalyses 4-hydroxy-4-methyl-2-oxoglutarate = 2 pyruvate. The catalysed reaction is oxaloacetate + H(+) = pyruvate + CO2. Catalyzes the aldol cleavage of 4-hydroxy-4-methyl-2-oxoglutarate (HMG) into 2 molecules of pyruvate. Also contains a secondary oxaloacetate (OAA) decarboxylase activity due to the common pyruvate enolate transition state formed following C-C bond cleavage in the retro-aldol and decarboxylation reactions. The protein is Putative 4-hydroxy-4-methyl-2-oxoglutarate aldolase of Deinococcus radiodurans (strain ATCC 13939 / DSM 20539 / JCM 16871 / CCUG 27074 / LMG 4051 / NBRC 15346 / NCIMB 9279 / VKM B-1422 / R1).